The following is a 178-amino-acid chain: Actin-related protein 2/3 complex subunit 3 (178 aa).

A Glycyl lysine isopeptide (Lys-Gly) (interchain with G-Cter in ubiquitin) cross-link involves residue K29.

The protein belongs to the ARPC3 family. In terms of assembly, component of the Arp2/3 complex composed of ARP2, ARP3, ARC40/p41-ARC, ARC35/p34-ARC, ARC18/p21-ARC, ARC19/p20-ARC and ARC16/p16-ARC.

It localises to the cytoplasm. The protein resides in the cytoskeleton. Its function is as follows. Functions as a component of the Arp2/3 complex which is involved in regulation of actin polymerization and together with an activating nucleation-promoting factor (NPF) mediates the formation of branched actin networks. In Saccharomyces cerevisiae (strain ATCC 204508 / S288c) (Baker's yeast), this protein is Actin-related protein 2/3 complex subunit 3 (ARC18).